Consider the following 489-residue polypeptide: MNGKYLSQLLDAKNKALTADVLIKALQTDSRKIQPGDLFIAYPGLQVDGRDYIKEALDKKAAAVFYEANQYNPSIQTKVPLIPFENLQHRIGEIAARFYDDPSCEMEIIGITGTNGKTSCAQFIAQALQSQGIRCGVIGTLGYGFLGSLHKTSHTTPEPIQLQQAFAEMRKQGAKAIAMEVSSHALHQRRVEGVQFDIAVFTQLSRDHLDYHGDMENYARAKELLFQQPGLHTGVVNCDDALGKRIIAHYRHQLTLVGYSANGVKDDRVSSVIASAIQPLAQGFSVEVQTPWGEGTFTTPLFGRFNISNLLAVLSVLCLCEIPFDKALLELSQLRNVPGRMQVVDSQRQPQIIVDYAHTPDALEKALTALREHCQGRLICVFGCGGDRDRGKRPQMAAVAEQHADQIILTNDNPRTESPLTIIQDIQAGFKNKNAVLVKLDRAEAIRYAVQMAAVNDIVLIAGKGHETTQTIADQVLPFNDVEEAKKAL.

S30 provides a ligand contact to UDP-N-acetyl-alpha-D-muramoyl-L-alanyl-D-glutamate. 113-119 contacts ATP; that stretch reads GTNGKTS. UDP-N-acetyl-alpha-D-muramoyl-L-alanyl-D-glutamate contacts are provided by residues 155-156, S182, Q188, and R190; that span reads TT. K222 bears the N6-carboxylysine mark. Residues R388, 412 to 415, G463, and E467 contribute to the meso-2,6-diaminopimelate site; that span reads DNPR. The Meso-diaminopimelate recognition motif signature appears at 412–415; the sequence is DNPR.

This sequence belongs to the MurCDEF family. MurE subfamily. Mg(2+) serves as cofactor. Carboxylation is probably crucial for Mg(2+) binding and, consequently, for the gamma-phosphate positioning of ATP.

The protein resides in the cytoplasm. The enzyme catalyses UDP-N-acetyl-alpha-D-muramoyl-L-alanyl-D-glutamate + meso-2,6-diaminopimelate + ATP = UDP-N-acetyl-alpha-D-muramoyl-L-alanyl-gamma-D-glutamyl-meso-2,6-diaminopimelate + ADP + phosphate + H(+). The protein operates within cell wall biogenesis; peptidoglycan biosynthesis. Functionally, catalyzes the addition of meso-diaminopimelic acid to the nucleotide precursor UDP-N-acetylmuramoyl-L-alanyl-D-glutamate (UMAG) in the biosynthesis of bacterial cell-wall peptidoglycan. This is UDP-N-acetylmuramoyl-L-alanyl-D-glutamate--2,6-diaminopimelate ligase from Coxiella burnetii (strain RSA 493 / Nine Mile phase I).